The primary structure comprises 251 residues: DNA repair protein RecO (251 aa).

This sequence belongs to the RecO family.

In terms of biological role, involved in DNA repair and RecF pathway recombination. The polypeptide is DNA repair protein RecO (Lactococcus lactis subsp. cremoris (strain MG1363)).